Reading from the N-terminus, the 78-residue chain is Translational regulator CsrA (78 aa).

The protein belongs to the CsrA/RsmA family. As to quaternary structure, homodimer; the beta-strands of each monomer intercalate to form a hydrophobic core, while the alpha-helices form wings that extend away from the core.

The protein resides in the cytoplasm. A translational regulator that binds mRNA to regulate translation initiation and/or mRNA stability. Usually binds in the 5'-UTR at or near the Shine-Dalgarno sequence preventing ribosome-binding, thus repressing translation. Its main target seems to be the major flagellin gene, while its function is anatagonized by FliW. In Borrelia recurrentis (strain A1), this protein is Translational regulator CsrA.